We begin with the raw amino-acid sequence, 351 residues long: CREB homolog crh-2 (351 aa).

Disordered stretches follow at residues 46–104 (EPCT…EPLG) and 119–149 (SPSA…HQQQ). A compositionally biased stretch (low complexity) spans 82–95 (GSSSGSPSSSLSSP). Residues 282–345 (SLKIVRRKIK…RDLQQKLHQY (64 aa)) enclose the bZIP domain. A basic motif region spans residues 284–304 (KIVRRKIKNKLSAQESRRKRK). The interval 307-314 (IDALEGRL) is leucine-zipper.

It belongs to the bZIP family.

Its subcellular location is the nucleus. In terms of biological role, transcription factor. Plays a role in regulating the developmentally arrested larval state known as dauer, when induced by long-term exposure to the Gram-negative bacterium P.aeruginosa PAO1, but dispensable for dauer formation induced by starvation. Involved in regulating expression of microRNA mir-243, during long-term exposure to P.aeruginosa PAO1. The chain is CREB homolog crh-2 from Caenorhabditis elegans.